The following is a 277-amino-acid chain: tRNA uridine(34) hydroxylase (277 aa).

Positions 126–221 (SSPDVHVIDT…YLETVRGDDS (96 aa)) constitute a Rhodanese domain. C181 (cysteine persulfide intermediate) is an active-site residue.

The protein belongs to the TrhO family.

The catalysed reaction is uridine(34) in tRNA + AH2 + O2 = 5-hydroxyuridine(34) in tRNA + A + H2O. In terms of biological role, catalyzes oxygen-dependent 5-hydroxyuridine (ho5U) modification at position 34 in tRNAs. This chain is tRNA uridine(34) hydroxylase, found in Anaplasma marginale (strain Florida).